We begin with the raw amino-acid sequence, 862 residues long: DNA replication licensing factor MCM4 (862 aa).

The segment covering 1–12 (MASRGGGGGGDG) has biased composition (gly residues). A disordered region spans residues 1–132 (MASRGGGGGG…GGGGGGAGAD (132 aa)). 2 stretches are compositionally biased toward low complexity: residues 20–41 (SSPD…PQSG) and 52–64 (SASP…SLGG). Residues 289–317 (CLVCGFYSEPVMVDRGRVTEPHICQKEQC) form a C4-type zinc finger. One can recognise an MCM domain in the interval 453 to 659 (IYDRLTRSLA…QTDRRLAKHI (207 aa)). 503-510 (GDPGTSKS) lines the ATP pocket. Positions 635–638 (SRFD) match the Arginine finger motif.

This sequence belongs to the MCM family. Component of the minichromosome maintenance (MCM) complex, a heterotetramer composed of MCM2, MCM3, MCM4, MCM5, MCM6 and MCM7.

The protein resides in the nucleus. The catalysed reaction is ATP + H2O = ADP + phosphate + H(+). Functionally, probable component of the MCM2-7 complex (MCM complex) that may function as a DNA helicase and which is essential to undergo a single round of replication initiation and elongation per cell cycle in eukaryotic cells. The chain is DNA replication licensing factor MCM4 (MCM4) from Oryza sativa subsp. japonica (Rice).